The following is a 451-amino-acid chain: DNA double-strand break repair nuclease NurA (451 aa).

Residues Asp-51 and Asp-126 each coordinate Mn(2+).

The protein belongs to the NurA family. In terms of assembly, homodimer. Interacts with HerA. Requires Mn(2+) as cofactor.

With respect to regulation, exonuclease activity is stimulated in the presence of HerA. In terms of biological role, involved in DNA double-strand break (DSB) repair. Probably acts with HerA to stimulate resection of the 5' strand and produce the long 3' single-strand that is required for RadA loading. Exhibits 5' endonuclease activity and both 5' and 3' exonuclease activities. In Pyrococcus furiosus (strain ATCC 43587 / DSM 3638 / JCM 8422 / Vc1), this protein is DNA double-strand break repair nuclease NurA.